The sequence spans 500 residues: Glutathione gamma-glutamylcysteinyltransferase 1 (500 aa).

The 221-residue stretch at 1 to 221 (MEVASLYRRV…GFMLVSRRSS (221 aa)) folds into the Peptidase C83 domain. Residues Cys-56, His-162, and Asp-180 contribute to the active site.

Belongs to the phytochelatin synthase family. As to expression, expressed in roots and shoots.

The enzyme catalyses [Glu(-Cys)](n)-Gly + glutathione + H(+) = [Glu(-Cys)](n+1)-Gly + glycine. With respect to regulation, requires cadmium for activity. In terms of biological role, involved in the synthesis of phytochelatins (PC) and homophytochelatins (hPC), the heavy-metal-binding peptides of plants. The polypeptide is Glutathione gamma-glutamylcysteinyltransferase 1 (PCS1) (Triticum aestivum (Wheat)).